We begin with the raw amino-acid sequence, 335 residues long: Beta-hexosaminidase (335 aa).

Substrate is bound by residues aspartate 60, arginine 68, arginine 133, and 163–164 (KH). Histidine 176 acts as the Proton donor/acceptor in catalysis. Catalysis depends on aspartate 247, which acts as the Nucleophile.

The protein belongs to the glycosyl hydrolase 3 family. NagZ subfamily.

It is found in the cytoplasm. It catalyses the reaction Hydrolysis of terminal non-reducing N-acetyl-D-hexosamine residues in N-acetyl-beta-D-hexosaminides.. Its pathway is cell wall biogenesis; peptidoglycan recycling. In terms of biological role, plays a role in peptidoglycan recycling by cleaving the terminal beta-1,4-linked N-acetylglucosamine (GlcNAc) from peptide-linked peptidoglycan fragments, giving rise to free GlcNAc, anhydro-N-acetylmuramic acid and anhydro-N-acetylmuramic acid-linked peptides. The polypeptide is Beta-hexosaminidase (Xylella fastidiosa (strain M12)).